Here is a 424-residue protein sequence, read N- to C-terminus: Serine--tRNA ligase (424 aa).

230 to 232 contributes to the L-serine binding site; that stretch reads TAE. Residue 261-263 coordinates ATP; it reads RSE. Glutamate 284 serves as a coordination point for L-serine. 348-351 is a binding site for ATP; it reads EISS. Residue serine 384 coordinates L-serine.

This sequence belongs to the class-II aminoacyl-tRNA synthetase family. Type-1 seryl-tRNA synthetase subfamily. As to quaternary structure, homodimer. The tRNA molecule binds across the dimer.

The protein resides in the cytoplasm. It catalyses the reaction tRNA(Ser) + L-serine + ATP = L-seryl-tRNA(Ser) + AMP + diphosphate + H(+). The enzyme catalyses tRNA(Sec) + L-serine + ATP = L-seryl-tRNA(Sec) + AMP + diphosphate + H(+). It participates in aminoacyl-tRNA biosynthesis; selenocysteinyl-tRNA(Sec) biosynthesis; L-seryl-tRNA(Sec) from L-serine and tRNA(Sec): step 1/1. In terms of biological role, catalyzes the attachment of serine to tRNA(Ser). Is also able to aminoacylate tRNA(Sec) with serine, to form the misacylated tRNA L-seryl-tRNA(Sec), which will be further converted into selenocysteinyl-tRNA(Sec). In Streptococcus pneumoniae (strain 70585), this protein is Serine--tRNA ligase.